The following is a 228-amino-acid chain: Geranylgeranylglyceryl phosphate synthase (228 aa).

Lys13 provides a ligand contact to sn-glycerol 1-phosphate. 2 residues coordinate Mg(2+): Asp15 and Thr41. Residues 159–164 (YVEYSG), Gly189, and 209–210 (GN) contribute to the sn-glycerol 1-phosphate site.

The protein belongs to the GGGP/HepGP synthase family. Group I subfamily. The cofactor is Mg(2+).

It localises to the cytoplasm. The enzyme catalyses sn-glycerol 1-phosphate + (2E,6E,10E)-geranylgeranyl diphosphate = sn-3-O-(geranylgeranyl)glycerol 1-phosphate + diphosphate. Its pathway is membrane lipid metabolism; glycerophospholipid metabolism. In terms of biological role, prenyltransferase that catalyzes the transfer of the geranylgeranyl moiety of geranylgeranyl diphosphate (GGPP) to the C3 hydroxyl of sn-glycerol-1-phosphate (G1P). This reaction is the first ether-bond-formation step in the biosynthesis of archaeal membrane lipids. This chain is Geranylgeranylglyceryl phosphate synthase, found in Methanosphaerula palustris (strain ATCC BAA-1556 / DSM 19958 / E1-9c).